Consider the following 1170-residue polypeptide: DNA-directed RNA polymerase subunit beta (1170 aa).

This sequence belongs to the RNA polymerase beta chain family. The RNAP catalytic core consists of 2 alpha, 1 beta, 1 beta' and 1 omega subunit. When a sigma factor is associated with the core the holoenzyme is formed, which can initiate transcription.

It catalyses the reaction RNA(n) + a ribonucleoside 5'-triphosphate = RNA(n+1) + diphosphate. DNA-dependent RNA polymerase catalyzes the transcription of DNA into RNA using the four ribonucleoside triphosphates as substrates. The sequence is that of DNA-directed RNA polymerase subunit beta from Corynebacterium urealyticum (strain ATCC 43042 / DSM 7109).